The sequence spans 663 residues: Nuclear receptor-binding protein homolog (663 aa).

Residues 1-14 (MSNSQANAGSSGSA) show a composition bias toward low complexity. Residues 1–112 (MSNSQANAGS…SEDESEILEE (112 aa)) form a disordered region. A compositionally biased stretch (polar residues) spans 19–46 (LNPSGSATLVPNLTTTNASSQATPASTI). Low complexity-rich tracts occupy residues 47–57 (PQQQQPQQSQP) and 81–94 (VVVAGGSEGVNLDS). Residues 101-111 (DDSEDESEILE) are compositionally biased toward acidic residues. The region spanning 122–392 (REEVDQRDVP…ANDLLFHPLL (271 aa)) is the Protein kinase domain. Disordered regions lie at residues 481–505 (PNFRSRAASPERADSVKSATPEPVD) and 638–663 (YVPQDQQQYQQQQQEADVDQSGTTSN). 3 positions are modified to phosphoserine: serine 489, serine 495, and serine 498. Threonine 500 carries the post-translational modification Phosphothreonine. Positions 641–652 (QDQQQYQQQQQE) are enriched in low complexity.

Belongs to the protein kinase superfamily. Ser/Thr protein kinase family.

It localises to the cytoplasm. It is found in the cell cortex. Its function is as follows. May play a role in subcellular trafficking between the endoplasmic reticulum and Golgi apparatus. The sequence is that of Nuclear receptor-binding protein homolog from Drosophila pseudoobscura pseudoobscura (Fruit fly).